The following is a 777-amino-acid chain: E3 UFM1-protein ligase 1 homolog (777 aa).

A compositionally biased stretch (basic and acidic residues) spans 396 to 417 (MKHQDPMDRDSAVGEGKADKRE). The interval 396 to 470 (MKHQDPMDRD…PSGGKKGGKD (75 aa)) is disordered.

Belongs to the UFL1 family.

Its function is as follows. E3 UFM1-protein ligase that mediates ufmylation of target proteins. The protein is E3 UFM1-protein ligase 1 homolog of Aedes aegypti (Yellowfever mosquito).